The chain runs to 67 residues: Protein AaeX (67 aa).

2 helical membrane-spanning segments follow: residues 10–30 (FGLS…LFFV) and 43–63 (FVWH…YLLF).

It belongs to the AaeX family.

It is found in the cell membrane. The polypeptide is Protein AaeX (Pectobacterium carotovorum subsp. carotovorum (strain PC1)).